The primary structure comprises 329 residues: Ketol-acid reductoisomerase (NADP(+)) (329 aa).

Residues 2 to 182 enclose the KARI N-terminal Rossmann domain; the sequence is TQLFYDTDAD…GGTRAGILET (181 aa). NADP(+) contacts are provided by residues 25-28, S51, S53, and 83-86; these read YGSQ and DEFQ. H108 is an active-site residue. Position 134 (G134) interacts with NADP(+). The KARI C-terminal knotted domain occupies 183 to 328; it reads NFKEETETDL…KGLRAMFSWL (146 aa). Residues D191, E195, E227, and E231 each contribute to the Mg(2+) site. S252 is a binding site for substrate.

This sequence belongs to the ketol-acid reductoisomerase family. It depends on Mg(2+) as a cofactor.

The catalysed reaction is (2R)-2,3-dihydroxy-3-methylbutanoate + NADP(+) = (2S)-2-acetolactate + NADPH + H(+). It catalyses the reaction (2R,3R)-2,3-dihydroxy-3-methylpentanoate + NADP(+) = (S)-2-ethyl-2-hydroxy-3-oxobutanoate + NADPH + H(+). It functions in the pathway amino-acid biosynthesis; L-isoleucine biosynthesis; L-isoleucine from 2-oxobutanoate: step 2/4. The protein operates within amino-acid biosynthesis; L-valine biosynthesis; L-valine from pyruvate: step 2/4. Functionally, involved in the biosynthesis of branched-chain amino acids (BCAA). Catalyzes an alkyl-migration followed by a ketol-acid reduction of (S)-2-acetolactate (S2AL) to yield (R)-2,3-dihydroxy-isovalerate. In the isomerase reaction, S2AL is rearranged via a Mg-dependent methyl migration to produce 3-hydroxy-3-methyl-2-ketobutyrate (HMKB). In the reductase reaction, this 2-ketoacid undergoes a metal-dependent reduction by NADPH to yield (R)-2,3-dihydroxy-isovalerate. The polypeptide is Ketol-acid reductoisomerase (NADP(+)) (Prochlorococcus marinus (strain MIT 9515)).